The sequence spans 530 residues: ATP synthase subunit alpha (530 aa).

172–179 serves as a coordination point for ATP; that stretch reads GDRQTGKT.

The protein belongs to the ATPase alpha/beta chains family. In terms of assembly, F-type ATPases have 2 components, CF(1) - the catalytic core - and CF(0) - the membrane proton channel. CF(1) has five subunits: alpha(3), beta(3), gamma(1), delta(1), epsilon(1). CF(0) has three main subunits: a(1), b(2) and c(9-12). The alpha and beta chains form an alternating ring which encloses part of the gamma chain. CF(1) is attached to CF(0) by a central stalk formed by the gamma and epsilon chains, while a peripheral stalk is formed by the delta and b chains.

The protein localises to the cell inner membrane. The enzyme catalyses ATP + H2O + 4 H(+)(in) = ADP + phosphate + 5 H(+)(out). In terms of biological role, produces ATP from ADP in the presence of a proton gradient across the membrane. The alpha chain is a regulatory subunit. The polypeptide is ATP synthase subunit alpha (Phocaeicola vulgatus (strain ATCC 8482 / DSM 1447 / JCM 5826 / CCUG 4940 / NBRC 14291 / NCTC 11154) (Bacteroides vulgatus)).